A 156-amino-acid polypeptide reads, in one-letter code: Small ribosomal subunit protein uS7 (156 aa).

This sequence belongs to the universal ribosomal protein uS7 family. Part of the 30S ribosomal subunit. Contacts proteins S9 and S11.

Its function is as follows. One of the primary rRNA binding proteins, it binds directly to 16S rRNA where it nucleates assembly of the head domain of the 30S subunit. Is located at the subunit interface close to the decoding center, probably blocks exit of the E-site tRNA. This chain is Small ribosomal subunit protein uS7, found in Carboxydothermus hydrogenoformans (strain ATCC BAA-161 / DSM 6008 / Z-2901).